A 194-amino-acid chain; its full sequence is Imidazoleglycerol-phosphate dehydratase (194 aa).

Belongs to the imidazoleglycerol-phosphate dehydratase family.

It is found in the cytoplasm. It catalyses the reaction D-erythro-1-(imidazol-4-yl)glycerol 3-phosphate = 3-(imidazol-4-yl)-2-oxopropyl phosphate + H2O. The protein operates within amino-acid biosynthesis; L-histidine biosynthesis; L-histidine from 5-phospho-alpha-D-ribose 1-diphosphate: step 6/9. This is Imidazoleglycerol-phosphate dehydratase from Halalkalibacterium halodurans (strain ATCC BAA-125 / DSM 18197 / FERM 7344 / JCM 9153 / C-125) (Bacillus halodurans).